The sequence spans 212 residues: Deoxyribose-phosphate aldolase (212 aa).

Residue D89 is the Proton donor/acceptor of the active site. K151 acts as the Schiff-base intermediate with acetaldehyde in catalysis. K180 functions as the Proton donor/acceptor in the catalytic mechanism.

It belongs to the DeoC/FbaB aldolase family. DeoC type 1 subfamily.

The protein localises to the cytoplasm. The enzyme catalyses 2-deoxy-D-ribose 5-phosphate = D-glyceraldehyde 3-phosphate + acetaldehyde. It participates in carbohydrate degradation; 2-deoxy-D-ribose 1-phosphate degradation; D-glyceraldehyde 3-phosphate and acetaldehyde from 2-deoxy-alpha-D-ribose 1-phosphate: step 2/2. Catalyzes a reversible aldol reaction between acetaldehyde and D-glyceraldehyde 3-phosphate to generate 2-deoxy-D-ribose 5-phosphate. The polypeptide is Deoxyribose-phosphate aldolase (Clostridium botulinum (strain Langeland / NCTC 10281 / Type F)).